A 376-amino-acid polypeptide reads, in one-letter code: N-acetyldiaminopimelate deacetylase (376 aa).

Aspartate 69 is a catalytic residue. The Proton acceptor role is filled by glutamate 128.

The protein belongs to the peptidase M20A family. N-acetyldiaminopimelate deacetylase subfamily.

It catalyses the reaction N-acetyl-(2S,6S)-2,6-diaminopimelate + H2O = (2S,6S)-2,6-diaminopimelate + acetate. Its pathway is amino-acid biosynthesis; L-lysine biosynthesis via DAP pathway; LL-2,6-diaminopimelate from (S)-tetrahydrodipicolinate (acetylase route): step 3/3. Catalyzes the conversion of N-acetyl-diaminopimelate to diaminopimelate and acetate. This is N-acetyldiaminopimelate deacetylase from Bacillus cytotoxicus (strain DSM 22905 / CIP 110041 / 391-98 / NVH 391-98).